A 226-amino-acid polypeptide reads, in one-letter code: ATP synthase F(0) complex subunit a (226 aa).

6 consecutive transmembrane segments (helical) span residues 6-26, 68-88, 97-117, 138-158, 164-184, and 189-209; these read FASFAAPTILGLPAAVLIILF, WSLMLVSLIIFITTTNLLGLL, QLSMNLAMAIPLWAGAVVMGF, IPMLVIIETISLLIQPMALAV, ITAGHLLMHLIGSATLALSTI, and ALIIFTILILLTILEIAVALI.

The protein belongs to the ATPase A chain family. As to quaternary structure, component of the ATP synthase complex composed at least of ATP5F1A/subunit alpha, ATP5F1B/subunit beta, ATP5MC1/subunit c (homooctomer), MT-ATP6/subunit a, MT-ATP8/subunit 8, ATP5ME/subunit e, ATP5MF/subunit f, ATP5MG/subunit g, ATP5MK/subunit k, ATP5MJ/subunit j, ATP5F1C/subunit gamma, ATP5F1D/subunit delta, ATP5F1E/subunit epsilon, ATP5PF/subunit F6, ATP5PB/subunit b, ATP5PD/subunit d, ATP5PO/subunit OSCP. ATP synthase complex consists of a soluble F(1) head domain (subunits alpha(3) and beta(3)) - the catalytic core - and a membrane F(0) domain - the membrane proton channel (subunits c, a, 8, e, f, g, k and j). These two domains are linked by a central stalk (subunits gamma, delta, and epsilon) rotating inside the F1 region and a stationary peripheral stalk (subunits F6, b, d, and OSCP). Interacts with DNAJC30; interaction is direct.

It is found in the mitochondrion inner membrane. The enzyme catalyses H(+)(in) = H(+)(out). Subunit a, of the mitochondrial membrane ATP synthase complex (F(1)F(0) ATP synthase or Complex V) that produces ATP from ADP in the presence of a proton gradient across the membrane which is generated by electron transport complexes of the respiratory chain. ATP synthase complex consist of a soluble F(1) head domain - the catalytic core - and a membrane F(1) domain - the membrane proton channel. These two domains are linked by a central stalk rotating inside the F(1) region and a stationary peripheral stalk. During catalysis, ATP synthesis in the catalytic domain of F(1) is coupled via a rotary mechanism of the central stalk subunits to proton translocation. With the subunit c (ATP5MC1), forms the proton-conducting channel in the F(0) domain, that contains two crucial half-channels (inlet and outlet) that facilitate proton movement from the mitochondrial intermembrane space (IMS) into the matrix. Protons are taken up via the inlet half-channel and released through the outlet half-channel, following a Grotthuss mechanism. The protein is ATP synthase F(0) complex subunit a of Pan troglodytes (Chimpanzee).